A 293-amino-acid chain; its full sequence is Epidermal growth factor-like protein 8 (293 aa).

An N-terminal signal peptide occupies residues 1-25; that stretch reads MGSRAELCTLLGGFSFLLLLIPGEG. The EMI domain occupies 34 to 112; sequence SQGVCSKQTL…RHPGALTCEA (79 aa). 9 cysteine pairs are disulfide-bonded: C38–C97, C65–C71, C96–C110, C114–C124, C118–C130, C132–C141, C148–C159, C155–C168, and C170–C183. An N-linked (GlcNAc...) asparagine glycan is attached at N50. The EGF-like 1 domain maps to 111 to 142; that stretch reads EAICAKPCLNGGVCVRPDQCECAPGWGGKHCH. Positions 144–184 constitute an EGF-like 2; calcium-binding domain; the sequence is DVDECRTSITLCSHHCFNTAGSFTCGCPHDLVLGVDGRTCM. Positions 195–232 form a coiled coil; that stretch reads SILSVAVREAEKDERALKQEIHELRGRLERLEQWAGQA.

The protein resides in the secreted. In Homo sapiens (Human), this protein is Epidermal growth factor-like protein 8 (EGFL8).